We begin with the raw amino-acid sequence, 648 residues long: Bifunctional protein TilS/HprT (648 aa).

29–34 (SGGPDS) is a binding site for ATP. Asp627 lines the Mg(2+) pocket.

It in the N-terminal section; belongs to the tRNA(Ile)-lysidine synthase family. This sequence in the C-terminal section; belongs to the purine/pyrimidine phosphoribosyltransferase family. It depends on Mg(2+) as a cofactor.

The protein resides in the cytoplasm. It catalyses the reaction IMP + diphosphate = hypoxanthine + 5-phospho-alpha-D-ribose 1-diphosphate. The enzyme catalyses GMP + diphosphate = guanine + 5-phospho-alpha-D-ribose 1-diphosphate. It carries out the reaction cytidine(34) in tRNA(Ile2) + L-lysine + ATP = lysidine(34) in tRNA(Ile2) + AMP + diphosphate + H(+). In terms of biological role, ligates lysine onto the cytidine present at position 34 of the AUA codon-specific tRNA(Ile) that contains the anticodon CAU, in an ATP-dependent manner. Cytidine is converted to lysidine, thus changing the amino acid specificity of the tRNA from methionine to isoleucine. In Listeria monocytogenes serovar 1/2a (strain ATCC BAA-679 / EGD-e), this protein is Bifunctional protein TilS/HprT (tilS/hprT).